The sequence spans 496 residues: Genome polyprotein (496 aa).

Topologically, residues serine 1–serine 447 are extracellular. 6 disulfide bridges follow: cysteine 3–cysteine 30, cysteine 60–cysteine 116, cysteine 60–cysteine 121, cysteine 74–cysteine 105, cysteine 92–cysteine 116, and cysteine 92–cysteine 121. The interval aspartate 98–glycine 111 is fusion peptide. Asparagine 154 carries N-linked (GlcNAc...) asparagine; by host glycosylation. 2 disulfide bridges follow: cysteine 186-cysteine 290 and cysteine 307-cysteine 338. The chain crosses the membrane as a helical span at residues isoleucine 448–glycine 468. Residues leucine 469–serine 479 lie on the Cytoplasmic side of the membrane. The chain crosses the membrane as a helical span at residues phenylalanine 480–alanine 496.

In terms of assembly, homodimer; in the endoplasmic reticulum and Golgi. Post-translationally, N-glycosylated.

The protein localises to the virion membrane. The protein resides in the host endoplasmic reticulum membrane. Its function is as follows. Binds to host cell surface receptor and mediates fusion between viral and cellular membranes. Envelope protein is synthesized in the endoplasmic reticulum in the form of heterodimer with protein prM. They play a role in virion budding in the ER, and the newly formed immature particle is covered with 60 spikes composed of heterodimer between precursor prM and envelope protein E. The virion is transported to the Golgi apparatus where the low pH causes dissociation of PrM-E heterodimers and formation of E homodimers. prM-E cleavage is ineficient, and many virions are only partially matured. These uncleaved prM would play a role in immune evasion. The protein is Genome polyprotein of Louping ill virus (strain Negishi 3248/49/P10) (Li).